Here is a 294-residue protein sequence, read N- to C-terminus: UDP-3-O-acyl-N-acetylglucosamine deacetylase (294 aa).

The Zn(2+) site is built by His-75, His-232, and Asp-236. Catalysis depends on His-259, which acts as the Proton donor.

It belongs to the LpxC family. Zn(2+) serves as cofactor.

The catalysed reaction is a UDP-3-O-[(3R)-3-hydroxyacyl]-N-acetyl-alpha-D-glucosamine + H2O = a UDP-3-O-[(3R)-3-hydroxyacyl]-alpha-D-glucosamine + acetate. Its pathway is glycolipid biosynthesis; lipid IV(A) biosynthesis; lipid IV(A) from (3R)-3-hydroxytetradecanoyl-[acyl-carrier-protein] and UDP-N-acetyl-alpha-D-glucosamine: step 2/6. Its function is as follows. Catalyzes the hydrolysis of UDP-3-O-myristoyl-N-acetylglucosamine to form UDP-3-O-myristoylglucosamine and acetate, the committed step in lipid A biosynthesis. The polypeptide is UDP-3-O-acyl-N-acetylglucosamine deacetylase (Campylobacter fetus subsp. fetus (strain 82-40)).